A 767-amino-acid chain; its full sequence is Cation/H(+) antiporter 27 (767 aa).

Helical transmembrane passes span 39 to 59, 63 to 83, 99 to 119, 135 to 155, 173 to 193, 205 to 225, 242 to 262, 280 to 300, 323 to 343, 371 to 391, and 415 to 435; these read LPLLLLQISVFSIFSVSFQFL, FGKFAFLTQMLAGICLGPSVI, VYIIESFEAICFLFICYITTC, INGILLFLIPFVWGQFAAILI, HVAIVQSTMFFQVVYGVLSSL, LASMMVHDCLSWCFFMLNIAI, VLQMIMILVIAYVFRPLMLWM, ICVLLFISCLWAEFVGLPYFF, IGCFVWSVLMPCYVIGIGLNI, IALPSLYYKVPLWHAILVGFI, and KSFGAMVMSATVNSTIFIVIV.

It belongs to the monovalent cation:proton antiporter 2 (CPA2) transporter (TC 2.A.37) family. CHX (TC 2.A.37.4) subfamily. As to expression, specifically expressed in pollen.

The protein localises to the membrane. Functionally, may operate as a cation/H(+) antiporter. The sequence is that of Cation/H(+) antiporter 27 (CHX27) from Arabidopsis thaliana (Mouse-ear cress).